Consider the following 255-residue polypeptide: 7alpha-hydroxysteroid dehydrogenase (255 aa).

Residues Ile23, 42-43 (DI), 68-69 (DI), and Asn95 contribute to the NAD(+) site. Glycochenodeoxycholate contacts are provided by Gly99, Ser146, Asn151, and Tyr159. NAD(+)-binding positions include Tyr159, Lys163, and 192–194 (ILT). The active-site Proton acceptor is Tyr159.

Belongs to the short-chain dehydrogenases/reductases (SDR) family. Homotetramer.

It carries out the reaction cholate + NAD(+) = 3alpha,12alpha-dihydroxy-7-oxo-5beta-cholanate + NADH + H(+). The enzyme catalyses chenodeoxycholate + NAD(+) = 7-oxolithocholate + NADH + H(+). It catalyses the reaction taurochenodeoxycholate + NAD(+) = 7-oxotaurolithocholate + NADH + H(+). The catalysed reaction is taurocholate + NAD(+) = 7-oxo-taurodeoxycholate + NADH + H(+). It carries out the reaction glycocholate + NAD(+) = 7-oxo-glycodeoxycholate + NADH + H(+). The enzyme catalyses glycochenodeoxycholate + NAD(+) = 7-oxoglycolithocholate + NADH + H(+). In terms of biological role, 7alpha-hydroxysteroid dehydrogenase involved in the metabolism of bile acids. Catalyzes the NAD(+)-dependent oxidation of the 7alpha-hydroxy group of 7alpha-hydroxysteroids, such as the major human bile acids cholate and chenodeoxycholate, to the corresponding 7-oxosteroids. To a lesser extent, can also act on taurochenodeoxycholate, taurocholate and glycocholate. Can also use glycochenodeoxycholate as substrate. Is not able to use NADP(+) instead of NAD(+) as the electron acceptor. In Escherichia coli O157:H7, this protein is 7alpha-hydroxysteroid dehydrogenase (hdhA).